The primary structure comprises 151 residues: Probable cGMP 3',5'-cyclic phosphodiesterase subunit delta (151 aa).

The protein belongs to the PDE6D/unc-119 family. As to quaternary structure, interacts with Pde6.

It is found in the nucleus. The protein resides in the cytoplasm. The chain is Probable cGMP 3',5'-cyclic phosphodiesterase subunit delta from Culex quinquefasciatus (Southern house mosquito).